The primary structure comprises 1058 residues: Carbamoyl phosphate synthase large chain (1058 aa).

The interval 1 to 401 (MAKRTDIKKI…CLLKACRSLE (401 aa)) is carboxyphosphate synthetic domain. The ATP site is built by R129, R169, G175, G176, R208, I210, E215, G241, I242, H243, Q284, and E298. Residues 133–327 (KQLMKELGEP…IAKIAAKIAV (195 aa)) enclose the ATP-grasp 1 domain. Mg(2+)-binding residues include Q284, E298, and N300. Mn(2+) contacts are provided by Q284, E298, and N300. The oligomerization domain stretch occupies residues 402–546 (IGVDHNELKG…YSTYEWENES (145 aa)). The interval 547-929 (IKSEKESVIV…ALYKAFEASY (383 aa)) is carbamoyl phosphate synthetic domain. An ATP-grasp 2 domain is found at 671 to 861 (EKALKDLGIP…MAQVATKLIL (191 aa)). ATP-binding residues include R707, S746, I748, E752, G777, V778, H779, S780, Q820, and E832. Positions 820, 832, and 834 each coordinate Mg(2+). Q820, E832, and N834 together coordinate Mn(2+). Positions 930-1058 (LHMPEYGTIV…ESRTFSIEAI (129 aa)) constitute an MGS-like domain. The segment at 930–1058 (LHMPEYGTIV…ESRTFSIEAI (129 aa)) is allosteric domain.

The protein belongs to the CarB family. Composed of two chains; the small (or glutamine) chain promotes the hydrolysis of glutamine to ammonia, which is used by the large (or ammonia) chain to synthesize carbamoyl phosphate. Tetramer of heterodimers (alpha,beta)4. Requires Mg(2+) as cofactor. It depends on Mn(2+) as a cofactor.

The enzyme catalyses hydrogencarbonate + L-glutamine + 2 ATP + H2O = carbamoyl phosphate + L-glutamate + 2 ADP + phosphate + 2 H(+). The catalysed reaction is hydrogencarbonate + NH4(+) + 2 ATP = carbamoyl phosphate + 2 ADP + phosphate + 2 H(+). Its pathway is amino-acid biosynthesis; L-arginine biosynthesis; carbamoyl phosphate from bicarbonate: step 1/1. It participates in pyrimidine metabolism; UMP biosynthesis via de novo pathway; (S)-dihydroorotate from bicarbonate: step 1/3. Functionally, large subunit of the glutamine-dependent carbamoyl phosphate synthetase (CPSase). CPSase catalyzes the formation of carbamoyl phosphate from the ammonia moiety of glutamine, carbonate, and phosphate donated by ATP, constituting the first step of 2 biosynthetic pathways, one leading to arginine and/or urea and the other to pyrimidine nucleotides. The large subunit (synthetase) binds the substrates ammonia (free or transferred from glutamine from the small subunit), hydrogencarbonate and ATP and carries out an ATP-coupled ligase reaction, activating hydrogencarbonate by forming carboxy phosphate which reacts with ammonia to form carbamoyl phosphate. The polypeptide is Carbamoyl phosphate synthase large chain (Streptococcus equi subsp. zooepidemicus (strain H70)).